We begin with the raw amino-acid sequence, 165 residues long: MIIEGPVIKFGDKIDTDIIIPARYLKYTDPQYLAQHVMEPLDPEFYKKASKGVIIVAGKVFGMGSSREQAAIALKAAGVKAVVAESFARIFYRNAINNGLPVITLPNSTKEIDENSYVKIDVETGEILVGNKVLKGKGITEMALEILQAGGIMEYLKKMQTVNRN.

It belongs to the LeuD family. LeuD type 2 subfamily. Heterodimer of LeuC and LeuD.

It carries out the reaction (2R,3S)-3-isopropylmalate = (2S)-2-isopropylmalate. It participates in amino-acid biosynthesis; L-leucine biosynthesis; L-leucine from 3-methyl-2-oxobutanoate: step 2/4. Its function is as follows. Catalyzes the isomerization between 2-isopropylmalate and 3-isopropylmalate, via the formation of 2-isopropylmaleate. This chain is 3-isopropylmalate dehydratase small subunit, found in Saccharolobus islandicus (strain Y.N.15.51 / Yellowstone #2) (Sulfolobus islandicus).